Consider the following 369-residue polypeptide: Nudix hydrolase 8 (369 aa).

Residues 188-318 (SHQVGVGGFV…GDKMFKRVIE (131 aa)) enclose the Nudix hydrolase domain. The short motif at 225–246 (GFINESEEIFSGAVREVKEETG) is the Nudix box element. Mg(2+)-binding residues include glutamate 240 and glutamate 244.

It belongs to the Nudix hydrolase family. Mg(2+) is required as a cofactor. Requires Mn(2+) as cofactor. In terms of tissue distribution, expressed in roots, stems and, at lower level, leaves.

In terms of biological role, probably mediates the hydrolysis of some nucleoside diphosphate derivatives. May be involved in plant immunity and act as a positive regulator of defense response through salicylic acid (SA) signaling. The sequence is that of Nudix hydrolase 8 (NUDT8) from Arabidopsis thaliana (Mouse-ear cress).